The following is a 69-amino-acid chain: Ribosome modulation factor (69 aa).

This sequence belongs to the ribosome modulation factor family.

The protein localises to the cytoplasm. Its function is as follows. During stationary phase, converts 70S ribosomes to an inactive dimeric form (100S ribosomes). This is Ribosome modulation factor from Hahella chejuensis (strain KCTC 2396).